The primary structure comprises 509 residues: tRNA-2-methylthio-N(6)-dimethylallyladenosine synthase (509 aa).

Over residues 1–15 the composition is skewed to polar residues; the sequence is MNEQQRLASQQVNSS. A disordered region spans residues 1 to 23; it reads MNEQQRLASQQVNSSTKKEEKDY. In terms of domain architecture, MTTase N-terminal spans 66-184; the sequence is RKFYIRTYGC…LPYILKDAMF (119 aa). Cys75, Cys111, Cys145, Cys221, Cys225, and Cys228 together coordinate [4Fe-4S] cluster. Residues 207 to 437 form the Radical SAM core domain; sequence RRGDIKAWVN…NALVNKLAIE (231 aa). The TRAM domain maps to 440–503; sequence DRYKGQIVEV…TWSLNGELVE (64 aa).

Belongs to the methylthiotransferase family. MiaB subfamily. As to quaternary structure, monomer. Requires [4Fe-4S] cluster as cofactor.

It is found in the cytoplasm. It carries out the reaction N(6)-dimethylallyladenosine(37) in tRNA + (sulfur carrier)-SH + AH2 + 2 S-adenosyl-L-methionine = 2-methylsulfanyl-N(6)-dimethylallyladenosine(37) in tRNA + (sulfur carrier)-H + 5'-deoxyadenosine + L-methionine + A + S-adenosyl-L-homocysteine + 2 H(+). In terms of biological role, catalyzes the methylthiolation of N6-(dimethylallyl)adenosine (i(6)A), leading to the formation of 2-methylthio-N6-(dimethylallyl)adenosine (ms(2)i(6)A) at position 37 in tRNAs that read codons beginning with uridine. The sequence is that of tRNA-2-methylthio-N(6)-dimethylallyladenosine synthase from Bacillus anthracis.